The primary structure comprises 486 residues: ATP-dependent rRNA helicase RRP3 (486 aa).

Residues 1 to 58 (MNGAKRRKVAQDTPRNTKPVAQEKPARAEPKPSSDEESEEESATLEEPSAEETAVDAP) form a disordered region. The span at 24–34 (KPARAEPKPSS) shows a compositional bias: basic and acidic residues. The segment covering 35 to 54 (DEESEEESATLEEPSAEETA) has biased composition (acidic residues). Positions 60 to 88 (KTFKDLGVNDALCEACEKLNYKYPTPIQE) match the Q motif motif. One can recognise a Helicase ATP-binding domain in the interval 91–262 (IPVALQGRDI…RASLRDPVKV (172 aa)). 104–111 (AETGSGKT) contacts ATP. The DEAD box signature appears at 210-213 (DEAD). The 149-residue stretch at 286-434 (QKDVHLIYLI…EYPTEKEEVM (149 aa)) folds into the Helicase C-terminal domain. Basic and acidic residues-rich tracts occupy residues 451 to 460 (MKSFTEERGK) and 476 to 486 (RGRDDMDREEG). A disordered region spans residues 451–486 (MKSFTEERGKKGSTLKGGRGKKGGKRGRDDMDREEG).

Belongs to the DEAD box helicase family. DDX47/RRP3 subfamily. As to quaternary structure, interacts with the SSU processome.

Its subcellular location is the nucleus. The enzyme catalyses ATP + H2O = ADP + phosphate + H(+). In terms of biological role, ATP-dependent rRNA helicase required for pre-ribosomal RNA processing. Involved in the maturation of the 35S-pre-rRNA and to its cleavage to mature 18S rRNA. The chain is ATP-dependent rRNA helicase RRP3 from Gibberella zeae (strain ATCC MYA-4620 / CBS 123657 / FGSC 9075 / NRRL 31084 / PH-1) (Wheat head blight fungus).